The chain runs to 96 residues: Co-chaperonin GroES (96 aa).

The protein belongs to the GroES chaperonin family. Heptamer of 7 subunits arranged in a ring. Interacts with the chaperonin GroEL.

Its subcellular location is the cytoplasm. Functionally, together with the chaperonin GroEL, plays an essential role in assisting protein folding. The GroEL-GroES system forms a nano-cage that allows encapsulation of the non-native substrate proteins and provides a physical environment optimized to promote and accelerate protein folding. GroES binds to the apical surface of the GroEL ring, thereby capping the opening of the GroEL channel. This chain is Co-chaperonin GroES, found in Halorhodospira halophila (strain DSM 244 / SL1) (Ectothiorhodospira halophila (strain DSM 244 / SL1)).